Consider the following 538-residue polypeptide: Cytochrome P450 18a1 (538 aa).

The chain crosses the membrane as a helical span at residues 24-44; that stretch reads QHLLMVFLGLLALVTLLQWLV. Cysteine 466 contributes to the heme binding site.

The protein belongs to the cytochrome P450 family. Heme is required as a cofactor. Expressed in body wall (epidermal and muscle cells) and mid- and hind-gut.

It localises to the endoplasmic reticulum membrane. It is found in the microsome membrane. Functionally, probably involved in steroid hormones biosynthesis. The polypeptide is Cytochrome P450 18a1 (Cyp18a1) (Drosophila melanogaster (Fruit fly)).